The sequence spans 338 residues: Heat-inducible transcription repressor HrcA (338 aa).

The protein belongs to the HrcA family.

Functionally, negative regulator of class I heat shock genes (grpE-dnaK-dnaJ and groELS operons). Prevents heat-shock induction of these operons. This Bacillus cereus (strain B4264) protein is Heat-inducible transcription repressor HrcA.